A 444-amino-acid polypeptide reads, in one-letter code: Guanosine nucleotide diphosphate dissociation inhibitor 2 (444 aa).

It belongs to the Rab GDI family. Expressed in roots and floral buds.

In terms of biological role, regulates the GDP/GTP exchange reaction of most RAB proteins by inhibiting the dissociation of GDP from them, and the subsequent binding of GTP. The sequence is that of Guanosine nucleotide diphosphate dissociation inhibitor 2 (GDI2) from Arabidopsis thaliana (Mouse-ear cress).